A 76-amino-acid chain; its full sequence is Large ribosomal subunit protein bL28 (76 aa).

The interval 21–42 (RGKAKKEGGVGKHITKTSRRRQ) is disordered. Residues 33–42 (HITKTSRRRQ) are compositionally biased toward basic residues.

Belongs to the bacterial ribosomal protein bL28 family.

The chain is Large ribosomal subunit protein bL28 from Halothermothrix orenii (strain H 168 / OCM 544 / DSM 9562).